The sequence spans 341 residues: Hyaluronan and proteoglycan link protein 2 (341 aa).

Residues M1–G27 form the signal peptide. The 109-residue stretch at P35–T143 folds into the Ig-like V-type domain. Cystine bridges form between C58–C129, C171–C241, C195–C216, C266–C337, and C291–C312. 2 consecutive Link domains span residues V149–T243 and L246–A339.

It belongs to the HAPLN family. Brain. Predominantly expressed by neurons. Colocalizes with versican V2 in developing and adult cerebellar white matter and at the nodes of Ranvier.

It localises to the secreted. The protein resides in the extracellular space. It is found in the extracellular matrix. In terms of biological role, mediates a firm binding of versican V2 to hyaluronic acid. May play a pivotal role in the formation of the hyaluronan-associated matrix in the central nervous system (CNS) which facilitates neuronal conduction and general structural stabilization. Binds to hyaluronic acid. This is Hyaluronan and proteoglycan link protein 2 (Hapln2) from Mus musculus (Mouse).